The primary structure comprises 490 residues: Ketol-acid reductoisomerase (NADP(+)) (490 aa).

A KARI N-terminal Rossmann domain is found at 15–208; the sequence is INLQKCKLID…GSHHAGILHS (194 aa). Residues 45 to 48, Arg68, Ser78, and 108 to 110 contribute to the NADP(+) site; these read CGSQ and DKQ. His132 is a catalytic residue. An NADP(+)-binding site is contributed by Gly158. 2 KARI C-terminal knotted domains span residues 209–344 and 345–484; these read SFIA…KCNI and YYKQ…MTSM. 4 residues coordinate Mg(2+): Asp217, Glu221, Glu389, and Glu393. Residue Ser414 coordinates substrate.

This sequence belongs to the ketol-acid reductoisomerase family. Mg(2+) is required as a cofactor.

It carries out the reaction (2R)-2,3-dihydroxy-3-methylbutanoate + NADP(+) = (2S)-2-acetolactate + NADPH + H(+). It catalyses the reaction (2R,3R)-2,3-dihydroxy-3-methylpentanoate + NADP(+) = (S)-2-ethyl-2-hydroxy-3-oxobutanoate + NADPH + H(+). Its pathway is amino-acid biosynthesis; L-isoleucine biosynthesis; L-isoleucine from 2-oxobutanoate: step 2/4. It functions in the pathway amino-acid biosynthesis; L-valine biosynthesis; L-valine from pyruvate: step 2/4. Functionally, involved in the biosynthesis of branched-chain amino acids (BCAA). Catalyzes an alkyl-migration followed by a ketol-acid reduction of (S)-2-acetolactate (S2AL) to yield (R)-2,3-dihydroxy-isovalerate. In the isomerase reaction, S2AL is rearranged via a Mg-dependent methyl migration to produce 3-hydroxy-3-methyl-2-ketobutyrate (HMKB). In the reductase reaction, this 2-ketoacid undergoes a metal-dependent reduction by NADPH to yield (R)-2,3-dihydroxy-isovalerate. The polypeptide is Ketol-acid reductoisomerase (NADP(+)) (Buchnera aphidicola subsp. Melaphis rhois).